A 504-amino-acid chain; its full sequence is L-carnitine/gamma-butyrobetaine antiporter (504 aa).

12 helical membrane passes run 10 to 30, 51 to 71, 92 to 112, 143 to 163, 195 to 215, 231 to 251, 263 to 283, 316 to 336, 347 to 367, 398 to 418, 446 to 466, and 475 to 495; these read IEPK…WLTV, WGWA…WLVF, IFMM…SIEI, GPLP…FFFV, FYLV…TPLV, LDAI…ACGL, SYLS…SFIM, WTVF…IFLA, LCFG…TVLG, WAAL…CFIA, LLVR…LLAL, and AIIA…LSFI.

This sequence belongs to the BCCT transporter (TC 2.A.15) family. CaiT subfamily. In terms of assembly, homotrimer.

It localises to the cell inner membrane. It catalyses the reaction 4-(trimethylamino)butanoate(in) + (R)-carnitine(out) = 4-(trimethylamino)butanoate(out) + (R)-carnitine(in). Its pathway is amine and polyamine metabolism; carnitine metabolism. Catalyzes the exchange of L-carnitine for gamma-butyrobetaine. The sequence is that of L-carnitine/gamma-butyrobetaine antiporter from Escherichia coli (strain ATCC 8739 / DSM 1576 / NBRC 3972 / NCIMB 8545 / WDCM 00012 / Crooks).